Consider the following 569-residue polypeptide: Acetate/butyrate--CoA ligase AAE7, peroxisomal (569 aa).

Positions 567–569 match the Microbody targeting signal motif; sequence SRL.

The protein belongs to the ATP-dependent AMP-binding enzyme family. As to expression, expressed in roots, leaves, stems, flowers and developing seeds.

The protein resides in the peroxisome. It catalyses the reaction acetate + ATP + CoA = acetyl-CoA + AMP + diphosphate. The catalysed reaction is a medium-chain fatty acid + ATP + CoA = a medium-chain fatty acyl-CoA + AMP + diphosphate. Functionally, peroxisomal acetate/butyrate--CoA ligase that is probably involved in the activation of exogenous acetate for entry into the glyoxylate cycle. May play a role to prevent carbon loss from peroxisomes during lipid mobilization. In vitro, is active with both acetate and butyrate. This chain is Acetate/butyrate--CoA ligase AAE7, peroxisomal (AAE7), found in Arabidopsis thaliana (Mouse-ear cress).